We begin with the raw amino-acid sequence, 844 residues long: DNA mismatch repair protein MutS (844 aa).

G610–S617 serves as a coordination point for ATP.

The protein belongs to the DNA mismatch repair MutS family.

This protein is involved in the repair of mismatches in DNA. It is possible that it carries out the mismatch recognition step. This protein has a weak ATPase activity. This chain is DNA mismatch repair protein MutS, found in Francisella tularensis subsp. holarctica (strain FTNF002-00 / FTA).